The following is a 592-amino-acid chain: V-type ATP synthase alpha chain 2 (592 aa).

237 to 244 (GGFGTGKT) is a binding site for ATP.

The protein belongs to the ATPase alpha/beta chains family.

The catalysed reaction is ATP + H2O + 4 H(+)(in) = ADP + phosphate + 5 H(+)(out). Functionally, produces ATP from ADP in the presence of a proton gradient across the membrane. The V-type alpha chain is a catalytic subunit. The chain is V-type ATP synthase alpha chain 2 from Clostridium tetani (strain Massachusetts / E88).